Reading from the N-terminus, the 102-residue chain is Small ribosomal subunit protein uS10 (102 aa).

This sequence belongs to the universal ribosomal protein uS10 family. In terms of assembly, part of the 30S ribosomal subunit.

Functionally, involved in the binding of tRNA to the ribosomes. The chain is Small ribosomal subunit protein uS10 from Fervidobacterium nodosum (strain ATCC 35602 / DSM 5306 / Rt17-B1).